Reading from the N-terminus, the 283-residue chain is Glutamyl-Q tRNA(Asp) synthetase (283 aa).

Residues 5 to 9 (RFAPT) and glutamate 41 each bind L-glutamate. Positions 8-18 (PTPSGPLHLGS) match the 'HIGH' region motif. Residues cysteine 97, cysteine 99, tyrosine 111, and cysteine 115 each coordinate Zn(2+). Tyrosine 168 and arginine 186 together coordinate L-glutamate. A 'KMSKS' region motif is present at residues 224–228 (KLSKQ). Lysine 227 provides a ligand contact to ATP.

It belongs to the class-I aminoacyl-tRNA synthetase family. GluQ subfamily. Requires Zn(2+) as cofactor.

Its function is as follows. Catalyzes the tRNA-independent activation of glutamate in presence of ATP and the subsequent transfer of glutamate onto a tRNA(Asp). Glutamate is transferred on the 2-amino-5-(4,5-dihydroxy-2-cyclopenten-1-yl) moiety of the queuosine in the wobble position of the QUC anticodon. This is Glutamyl-Q tRNA(Asp) synthetase from Idiomarina loihiensis (strain ATCC BAA-735 / DSM 15497 / L2-TR).